Reading from the N-terminus, the 253-residue chain is DNA polymerase sliding clamp (253 aa).

Belongs to the PCNA family. As to quaternary structure, homotrimer. The subunits circularize to form a toroid; DNA passes through its center. Replication factor C (RFC) is required to load the toroid on the DNA.

In terms of biological role, sliding clamp subunit that acts as a moving platform for DNA processing. Responsible for tethering the catalytic subunit of DNA polymerase and other proteins to DNA during high-speed replication. The chain is DNA polymerase sliding clamp from Methanopyrus kandleri (strain AV19 / DSM 6324 / JCM 9639 / NBRC 100938).